The primary structure comprises 254 residues: UstYa family oxidase phomYc' (254 aa).

The helical transmembrane segment at 38-58 (LVLVLQSVLIISLLASLHILG) threads the bilayer. N64 is a glycosylation site (N-linked (GlcNAc...) asparagine). Residues 138–142 (HQLHC) carry the HXXHC 1 motif. N159 carries an N-linked (GlcNAc...) asparagine glycan. The short motif at 173 to 177 (HIDHC) is the HXXHC 2 element.

It belongs to the ustYa family.

It is found in the membrane. It functions in the pathway mycotoxin biosynthesis. Functionally, ustYa family oxidase; part of the gene cluster that mediates the biosynthesis of the phomopsins, a group of hexapeptide mycotoxins which infects lupins and causes lupinosis disease in livestock. Within the pathway, phomYc' catalyzes the desaturation of the Ile moiety into 2,3-dehydroisoleucine (dIle). The pathway starts with the processing of the precursor phomA' by several endopeptidases including kexin proteases as well as the cluster-specific S41 family peptidase phomP1 and the oligopeptidase phomG' to produce 10 identical copies of the hexapeptide Tyr-Val-Ile-Pro-Ile-Asp. After being excised from the precursor peptide, the core peptides are cyclized and modified post-translationally by enzymes encoded within the gene cluster. The timing and order of proteolysis of the phomA' precursor and PTMs are still unknown. Two tyrosinase-like enzymes, phomQ1' and phomQ2, catalyze the chlorination and hydroxylation of Tyr, respectively. PhomYb, is proposed to be involved in the construction of the macrocyclic structure. The other 4 ustYa family proteins may be involved in PTMs that generate the unique structure of phomopsin A. PhomYa' is required for the hydroxylation of C-beta of Tyr. PhomYc', phomYd', and phomYe are responsible for the biosynthesis of 2,3-dehydroisoleucine (dIle), 2,3-dehydroaspartic acid (dAsp), and 3,4-dehydroproline (dPro), respectively. While dIle formation by phomYc' is indispensable for the installation of dAsp by phomYd', the order of the other PTMs have not been elucidated yet. Most of the biosynthetic enzymes likely have broad substrate specificity, and thus, there might be a metabolic grid from a precursor to phomopsin A. The enzyme(s) responsible for the biosynthesis of 3,4-dehydrovaline (dVal) have also not been identified yet. Finally, phomM' acts as an S-adenosylmethionine-dependent alpha-N-methyltransferase that catalyzes two successive N-methylation reactions, converting N-desmethyl-phomopsin A to phomopsin A and phomopsin A further to an N,N-dimethylated congener called phomopsin E. The sequence is that of UstYa family oxidase phomYc' from Diaporthe leptostromiformis (Lupinosis disease fungus).